A 285-amino-acid chain; its full sequence is AT-hook motif nuclear-localized protein 21 (285 aa).

The disordered stretch occupies residues 17 to 95; the sequence is DGGGGGQFTT…GSKNKPKPPV (79 aa). Residues 39–50 are compositionally biased toward basic residues; that stretch reads NHHHHHHNHNHH. Positions 63–73 are enriched in gly residues; sequence GLGGGGGGGSG. Positions 78-90 form a DNA-binding region, a.T hook; sequence RRPRGRPAGSKNK. The region spanning 102 to 238 is the PPC domain; sequence ANTLRAHILE…EHEEHLQSGG (137 aa).

Preferentially expressed in roots, but also in flowers and leaves. Detected in the inflorescence meristem, floral primordia and developing reproductive organs.

It is found in the nucleus. The protein resides in the nucleoplasm. Its function is as follows. Transcription factor that specifically binds AT-rich DNA sequences related to the nuclear matrix attachment regions (MARs). Binds to the MARs present in the ETTIN (ETT) promoter leading to a negative regulation of its gene expression. Functions as a molecular node downstream of the homeotic protein AGAMOUS (AG), regulating patterning and differentiation of reproductive organs. Acts as a chromatin remodeling factor that modifies the architecture of ETTIN (ETT) chromatin by modulating H3 methylation leading to the regulation of ETT expression. Seems to be involved in the regulation of a set of reproductives genes including CRABS CLAW (CRC), JAGGED (JAG) and KNUCKLES (KNU). The chain is AT-hook motif nuclear-localized protein 21 from Arabidopsis thaliana (Mouse-ear cress).